The sequence spans 636 residues: 1-deoxy-D-xylulose-5-phosphate synthase (636 aa).

Residues H74 and 115 to 117 (GHA) contribute to the thiamine diphosphate site. D146 lines the Mg(2+) pocket. Thiamine diphosphate is bound by residues 147-148 (GA), N175, Y285, and E368. A Mg(2+)-binding site is contributed by N175.

The protein belongs to the transketolase family. DXPS subfamily. Homodimer. Requires Mg(2+) as cofactor. Thiamine diphosphate serves as cofactor.

The catalysed reaction is D-glyceraldehyde 3-phosphate + pyruvate + H(+) = 1-deoxy-D-xylulose 5-phosphate + CO2. It functions in the pathway metabolic intermediate biosynthesis; 1-deoxy-D-xylulose 5-phosphate biosynthesis; 1-deoxy-D-xylulose 5-phosphate from D-glyceraldehyde 3-phosphate and pyruvate: step 1/1. Functionally, catalyzes the acyloin condensation reaction between C atoms 2 and 3 of pyruvate and glyceraldehyde 3-phosphate to yield 1-deoxy-D-xylulose-5-phosphate (DXP). This chain is 1-deoxy-D-xylulose-5-phosphate synthase, found in Anaeromyxobacter dehalogenans (strain 2CP-1 / ATCC BAA-258).